The sequence spans 2153 residues: RNA-directed RNA polymerase L (2153 aa).

5 residues coordinate Mn(2+): H36, E54, D97, E110, and V111. K124 acts as the For endonuclease activity in catalysis. The RdRp catalytic domain maps to 957 to 1143; that stretch reads TGKSIKFKRK…AINQEMWKSM (187 aa). A Mg(2+)-binding site is contributed by D1100.

It belongs to the Bunyavirales RNA polymerase family. As to quaternary structure, interacts with the viral nucleoprotein. The cofactor is Mn(2+). Mg(2+) serves as cofactor.

The protein localises to the host cytoplasm. It localises to the host perinuclear region. The catalysed reaction is RNA(n) + a ribonucleoside 5'-triphosphate = RNA(n+1) + diphosphate. Its function is as follows. RNA-dependent RNA polymerase, which is responsible for the replication and transcription of the viral RNA genome using antigenomic RNA as an intermediate. During transcription, synthesizes subgenomic RNAs and assures their capping by a cap-snatching mechanism, which involves the endonuclease activity cleaving the host capped pre-mRNAs. These short capped RNAs are then used as primers for viral transcription. Cleaves ssRNA substrates but not DNA. Seems to downregulate the expression of its own and heterologous mRNAs through its endonuclease activity. The polypeptide is RNA-directed RNA polymerase L (Abrothrix longipilis (Long-haired grass mouse)).